A 79-amino-acid chain; its full sequence is Reactive oxygen species modulator 1 (79 aa).

The helical transmembrane segment at 23–43 (FMMGFAVGMAAGALFGTFSCL) threads the bilayer. The sufficient for antibacterial activity stretch occupies residues 42-60 (CLRFGMRGRELMGGVGKTM).

Belongs to the MGR2 family.

The protein resides in the mitochondrion inner membrane. Functionally, has antibacterial activity against a variety of bacteria including S.aureus, P.aeruginosa and M.tuberculosis. Acts by inducing bacterial membrane breakage. Induces production of reactive oxygen species (ROS) which are necessary for cell proliferation. May play a role in inducing oxidative DNA damage and replicative senescence. May play a role in the coordination of mitochondrial morphology and cell proliferation. The polypeptide is Reactive oxygen species modulator 1 (romo1) (Xenopus tropicalis (Western clawed frog)).